The sequence spans 84 residues: MLAIRLSRGGSRKRPFYHVVATDSRNARDSNFIERLGFFNPQARGQEEELRLDLERIEYWQSQGGQISDRVKSLIKQYKKSANK.

Belongs to the bacterial ribosomal protein bS16 family.

This chain is Small ribosomal subunit protein bS16, found in Dichelobacter nodosus (strain VCS1703A).